The primary structure comprises 262 residues: Phosphonates import ATP-binding protein PhnC (262 aa).

Residues 5-253 form the ABC transporter domain; the sequence is IRVEKLAKTF…RFDHLYRSIN (249 aa). 37–44 provides a ligand contact to ATP; the sequence is GPSGSGKS.

Belongs to the ABC transporter superfamily. Phosphonates importer (TC 3.A.1.9.1) family. In terms of assembly, the complex is composed of two ATP-binding proteins (PhnC), two transmembrane proteins (PhnE) and a solute-binding protein (PhnD).

The protein resides in the cell inner membrane. The catalysed reaction is phosphonate(out) + ATP + H2O = phosphonate(in) + ADP + phosphate + H(+). Its function is as follows. Part of the ABC transporter complex PhnCDE involved in phosphonates import. Responsible for energy coupling to the transport system. This chain is Phosphonates import ATP-binding protein PhnC, found in Shigella dysenteriae serotype 1 (strain Sd197).